We begin with the raw amino-acid sequence, 860 residues long: Eukaryotic translation initiation factor 3 subunit C (860 aa).

The interval 1 to 76 is disordered; it reads MSRFFYGNDS…SEESEEEDVV (76 aa). The span at 10 to 51 shows a compositional bias: acidic residues; sequence SDSDSSGSDEEELYSDEEVEQSEEESSEEDASSEEESSEDED. The PCI domain maps to 599 to 773; that stretch reads FHMHINLELL…DAIVFRKGVE (175 aa). A disordered region spans residues 812-860; the sequence is RDQGAGARGGRGPRGGGQARGGPRLPGGQQRRPGGQQFGGGALGGAIKA. A compositionally biased stretch (gly residues) spans 817–831; that stretch reads GARGGRGPRGGGQAR. Residues 832–846 are compositionally biased toward low complexity; the sequence is GGPRLPGGQQRRPGG. Gly residues predominate over residues 847 to 860; it reads QQFGGGALGGAIKA.

Belongs to the eIF-3 subunit C family. Component of the eukaryotic translation initiation factor 3 (eIF-3) complex.

It localises to the cytoplasm. Its function is as follows. Component of the eukaryotic translation initiation factor 3 (eIF-3) complex, which is involved in protein synthesis of a specialized repertoire of mRNAs and, together with other initiation factors, stimulates binding of mRNA and methionyl-tRNAi to the 40S ribosome. The eIF-3 complex specifically targets and initiates translation of a subset of mRNAs involved in cell proliferation. The chain is Eukaryotic translation initiation factor 3 subunit C (nip1) from Emericella nidulans (strain FGSC A4 / ATCC 38163 / CBS 112.46 / NRRL 194 / M139) (Aspergillus nidulans).